We begin with the raw amino-acid sequence, 363 residues long: Wortmanamides biosynthesis cluster protein C (363 aa).

7 consecutive transmembrane segments (helical) span residues F15 to A35, W48 to I68, I95 to F115, I129 to Q149, I175 to I195, V210 to V230, and L237 to C257. The disordered stretch occupies residues S293–P312. An N-linked (GlcNAc...) asparagine glycan is attached at N321. Residues S344–V363 form a disordered region.

This sequence belongs to the SAT4 family.

Its subcellular location is the membrane. It functions in the pathway secondary metabolite biosynthesis. Part of the gene cluster that mediates the biosynthesis of wortmanamides A and B, reduced long-chain polyketides amidated with a specific omega-amino acid, 5-aminopentanoic acid (5PA). The PKS modules of TwmB are involved in the synthesis of the polyketide backbone, whereas the non-canonical C domain of TwmB is a bonafide condensation domain that specifically selects 5PA and catalyzes amidation to release polyketide chain. The C domain clearly prefers C16 and C18 fatty acyl substrates, which is consistent with simultaneous formation of both octaketide and nonaketide acyl amides wortmanamides A and B. Because TwmB lacks a designated enoylreductase (ER) domain, the required activity is provided the enoyl reductase TwmE. The roles of the remaining enzymes have still to be clarified. This chain is Wortmanamides biosynthesis cluster protein C, found in Talaromyces wortmannii (Penicillium wortmannii).